The sequence spans 236 residues: 1-(5-phosphoribosyl)-5-[(5-phosphoribosylamino)methylideneamino] imidazole-4-carboxamide isomerase (236 aa).

Asp8 serves as the catalytic Proton acceptor. Asp129 functions as the Proton donor in the catalytic mechanism.

This sequence belongs to the HisA/HisF family.

It localises to the cytoplasm. It catalyses the reaction 1-(5-phospho-beta-D-ribosyl)-5-[(5-phospho-beta-D-ribosylamino)methylideneamino]imidazole-4-carboxamide = 5-[(5-phospho-1-deoxy-D-ribulos-1-ylimino)methylamino]-1-(5-phospho-beta-D-ribosyl)imidazole-4-carboxamide. The protein operates within amino-acid biosynthesis; L-histidine biosynthesis; L-histidine from 5-phospho-alpha-D-ribose 1-diphosphate: step 4/9. The protein is 1-(5-phosphoribosyl)-5-[(5-phosphoribosylamino)methylideneamino] imidazole-4-carboxamide isomerase of Methanocorpusculum labreanum (strain ATCC 43576 / DSM 4855 / Z).